Reading from the N-terminus, the 579-residue chain is Eukaryotic translation initiation factor 3 subunit D (579 aa).

Disordered stretches follow at residues 1–20 (MASFKLPELQPDNDLWGPAS), 51–72 (NASGASNDAANARGGRQGRARD), and 109–170 (RRGG…FGWK). A compositionally biased stretch (low complexity) spans 51 to 64 (NASGASNDAANARG). A compositionally biased stretch (gly residues) spans 120-167 (GGRGGRGGAGGAGAAGGRGASKFGAGAGRGARGGRGGAAGARRGGGRF). The tract at residues 307–321 (AFDYLTVNENAADPP) is RNA gate.

The protein belongs to the eIF-3 subunit D family. As to quaternary structure, component of the eukaryotic translation initiation factor 3 (eIF-3) complex.

The protein localises to the cytoplasm. MRNA cap-binding component of the eukaryotic translation initiation factor 3 (eIF-3) complex, which is involved in protein synthesis of a specialized repertoire of mRNAs and, together with other initiation factors, stimulates binding of mRNA and methionyl-tRNAi to the 40S ribosome. The eIF-3 complex specifically targets and initiates translation of a subset of mRNAs involved in cell proliferation. In the eIF-3 complex, eif3d specifically recognizes and binds the 7-methylguanosine cap of a subset of mRNAs. In Mycosarcoma maydis (Corn smut fungus), this protein is Eukaryotic translation initiation factor 3 subunit D.